The chain runs to 552 residues: MEKVKQTIRAPRGTELQTKGWVQEAALRMLMNNLDPEVAEKPEELVVYGGIGRAARNWESYNAIVDSLKTLESDETLLVQSGKPVAIFKSHEDAPRVLLANSNLVPKWANWDHFRELEKKGLMMYGQMTAGSWIYIGTQGILQGTYETFGEAARQHFGGSLKGTLTLTAGLGGMGGAQPLAVTMNGGVVIAIDVDKRSIDRRIEKRYCDMYTESLEEALTVANEYKEKKEPISIGLLGNAAEILPELVKRNITPDLVTDQTSAHDPLNGYIPVGYTLEEAAKLREEDPERYVQLSKESMTKHVEAMLTMQAKGAITFDYGNNIRQVAFDEGLKNAFDFPGFVPAFIRPLFCEGKGPFRWVALSGDPEDIYKTDEVILREFADNEHLCNWIRMARQQVEFQGLPSRICWLGYGERAKFGRIINEMVANGELSAPIVIGRDHLDCGSVASPNRETEAMKDGSDAVADWPILNALINSVNGASWVSVHHGGGVGMGYSLHAGMVIVADGTEAAAKRIERVLTSDPGMGVVRHVDAGYDLAVETAKEKGVNIPMMK.

Residues 49-50 (GG), Gln-127, 173-175 (GMG), Asp-193, 239-240 (NA), 260-264 (QTSAH), 270-271 (YI), and Tyr-319 each bind NAD(+). Cys-407 is an active-site residue. Gly-489 is an NAD(+) binding site.

The protein belongs to the urocanase family. The cofactor is NAD(+).

Its subcellular location is the cytoplasm. It catalyses the reaction 4-imidazolone-5-propanoate = trans-urocanate + H2O. It functions in the pathway amino-acid degradation; L-histidine degradation into L-glutamate; N-formimidoyl-L-glutamate from L-histidine: step 2/3. Functionally, catalyzes the conversion of urocanate to 4-imidazolone-5-propionate. In Bacillus cereus (strain AH187), this protein is Urocanate hydratase.